Here is a 263-residue protein sequence, read N- to C-terminus: Phosphatidylglycerol--prolipoprotein diacylglyceryl transferase (263 aa).

4 consecutive transmembrane segments (helical) span residues 15-35 (ISIHWYAICIVSGLLLAVYLA), 52-72 (FILLAFPIAIVGARLYYVIFQ), 83-103 (IFAIWNGGIAIYGGLIAGAAV), and 112-132 (AIAVLDFLDIAAPGVMIAQSI). Residue Arg134 coordinates a 1,2-diacyl-sn-glycero-3-phospho-(1'-sn-glycerol). 3 consecutive transmembrane segments (helical) span residues 170–190 (VPTFLYESLWNLVGFSIILGL), 200–220 (GDVTSFYLIWYGLGRFVIEGM), and 230–250 (LRVSQWVSISIIILGAVLLYF).

This sequence belongs to the Lgt family.

The protein resides in the cell membrane. The catalysed reaction is L-cysteinyl-[prolipoprotein] + a 1,2-diacyl-sn-glycero-3-phospho-(1'-sn-glycerol) = an S-1,2-diacyl-sn-glyceryl-L-cysteinyl-[prolipoprotein] + sn-glycerol 1-phosphate + H(+). Its pathway is protein modification; lipoprotein biosynthesis (diacylglyceryl transfer). Its function is as follows. Catalyzes the transfer of the diacylglyceryl group from phosphatidylglycerol to the sulfhydryl group of the N-terminal cysteine of a prolipoprotein, the first step in the formation of mature lipoproteins. The protein is Phosphatidylglycerol--prolipoprotein diacylglyceryl transferase of Streptococcus thermophilus (strain ATCC BAA-250 / LMG 18311).